The primary structure comprises 405 residues: Tyrosine--tRNA ligase (405 aa).

The 'HIGH' region motif lies at 48–57 (PSRPDLHLGH). The 'KMSKS' region motif lies at 232 to 236 (KMSKS). Lysine 235 is an ATP binding site. One can recognise an S4 RNA-binding domain in the interval 339-400 (LPLVDLLTTL…AGKRKFFRIA (62 aa)).

Belongs to the class-I aminoacyl-tRNA synthetase family. TyrS type 2 subfamily. As to quaternary structure, homodimer.

The protein resides in the cytoplasm. The enzyme catalyses tRNA(Tyr) + L-tyrosine + ATP = L-tyrosyl-tRNA(Tyr) + AMP + diphosphate + H(+). Its function is as follows. Catalyzes the attachment of tyrosine to tRNA(Tyr) in a two-step reaction: tyrosine is first activated by ATP to form Tyr-AMP and then transferred to the acceptor end of tRNA(Tyr). This Chlorobium luteolum (strain DSM 273 / BCRC 81028 / 2530) (Pelodictyon luteolum) protein is Tyrosine--tRNA ligase.